A 524-amino-acid chain; its full sequence is Tyrosine-protein kinase HCK (524 aa).

The tract at residues 1-72 is disordered; it reads MGGRSSCEDP…NNSNSMPPGF (72 aa). The N-myristoyl glycine moiety is linked to residue Gly-2. Residue Gly-3 is the site of S-palmitoyl cysteine attachment. Basic and acidic residues predominate over residues 29 to 38; the sequence is FLRDGSKASK. Residue Tyr-50 is modified to Phosphotyrosine; by autocatalysis. The span at 54–68 shows a compositional bias: polar residues; it reads PTSSSKLGPNNSNSM. The SH3 domain occupies 76 to 136; the sequence is SEDTIVVALY…PSNYVARVNS (61 aa). The SH2 domain occupies 142–239; the sequence is WFFKGISRKD…GLCQKLSVPC (98 aa). Position 200 is a phosphothreonine (Thr-200). Tyr-207 is modified (phosphotyrosine). The Protein kinase domain maps to 260-513; sequence LQMEKKLGAG…YIQSVLDDFY (254 aa). Residues 266–274 and Lys-288 each bind ATP; that span reads LGAGQFGEV. Asp-379 (proton acceptor) is an active-site residue. Residue Tyr-409 is modified to Phosphotyrosine; by autocatalysis. At Ser-460 the chain carries Phosphoserine. Tyr-520 is subject to Phosphotyrosine.

Belongs to the protein kinase superfamily. Tyr protein kinase family. SRC subfamily. As to quaternary structure, interacts with ADAM15. Interacts with FASLG. Interacts with ARRB1 and ARRB2. Interacts with FCGR1A; the interaction may be indirect. Interacts with IL6ST. Interacts (via SH3 domain) with ELMO1. Interacts (via SH3 domain) with TP73. Interacts with YAP1. Interacts with ABL1 and ITGB1, and thereby recruits ABL1 to activated ITGB1. Interacts (via SH2 domain) with FLT3 (tyrosine phosphorylated). Interacts with CBL. Interacts with VAV1, WAS and RAPGEF1. Interacts (via SH3 domain) with WDCP. In terms of processing, phosphorylated on several tyrosine residues. Autophosphorylated. Becomes rapidly phosphorylated upon activation of the immunoglobulin receptors FCGR1A and FCGR2A. Phosphorylation at Tyr-409 increases kinase activity. Phosphorylation at Tyr-520 inhibits kinase activity. Kinase activity is not required for phosphorylation at Tyr-520, suggesting that this site may be a target of other kinases. Post-translationally, ubiquitinated by CBL, leading to its degradation via the proteasome. Isoform 2 palmitoylation at position 2 requires prior myristoylation. Palmitoylation at position 3 is required for caveolar localization of isoform 2. As to expression, expressed predominantly in cells of the myeloid and B-lymphoid lineages.

It is found in the cytoplasmic vesicle. It localises to the secretory vesicle. The protein resides in the cytoplasm. Its subcellular location is the cytosol. The protein localises to the membrane. It is found in the caveola. It localises to the lysosome. The protein resides in the cell projection. Its subcellular location is the podosome membrane. The protein localises to the cell membrane. It is found in the cell junction. It localises to the focal adhesion. The protein resides in the cytoskeleton. Its subcellular location is the golgi apparatus. The protein localises to the nucleus. The catalysed reaction is L-tyrosyl-[protein] + ATP = O-phospho-L-tyrosyl-[protein] + ADP + H(+). Its activity is regulated as follows. Subject to autoinhibition, mediated by intramolecular interactions involving the SH2 and SH3 domains. Kinase activity is also regulated by phosphorylation at regulatory tyrosine residues. Phosphorylation at Tyr-409 is required for optimal activity. Phosphorylation at Tyr-520 inhibits kinase activity. Inhibited by PP1. Its function is as follows. Non-receptor tyrosine-protein kinase found in hematopoietic cells that transmits signals from cell surface receptors and plays an important role in the regulation of innate immune responses, including neutrophil, monocyte, macrophage and mast cell functions, phagocytosis, cell survival and proliferation, cell adhesion and migration. Acts downstream of receptors that bind the Fc region of immunoglobulins, such as FCGR1A and FCGR2A, but also CSF3R, PLAUR, the receptors for IFNG, IL2, IL6 and IL8, and integrins, such as ITGB1 and ITGB2. During the phagocytic process, mediates mobilization of secretory lysosomes, degranulation, and activation of NADPH oxidase to bring about the respiratory burst. Plays a role in the release of inflammatory molecules. Promotes reorganization of the actin cytoskeleton and actin polymerization, formation of podosomes and cell protrusions. Inhibits TP73-mediated transcription activation and TP73-mediated apoptosis. Phosphorylates CBL in response to activation of immunoglobulin gamma Fc region receptors. Phosphorylates ADAM15, BCR, ELMO1, FCGR2A, GAB1, GAB2, RAPGEF1, STAT5B, TP73, VAV1 and WAS. The chain is Tyrosine-protein kinase HCK (Hck) from Mus musculus (Mouse).